The sequence spans 456 residues: Bacteriochlorophyllide d C-12(1)-methyltransferase (456 aa).

Residues 178-405 (HAKKYSQLIP…MFEPKKLGGE (228 aa)) enclose the Radical SAM core domain. Positions 194, 198, and 201 each coordinate [4Fe-4S] cluster.

This sequence belongs to the radical SAM superfamily. Requires [4Fe-4S] cluster as cofactor.

The protein localises to the cytoplasm. It catalyses the reaction 8-ethyl-12-methyl-3-vinylbacteriochlorophyllide d + S-adenosyl-L-methionine = 8,12-diethyl-3-vinylbacteriochlorophyllide d + S-adenosyl-L-homocysteine + H(+). It functions in the pathway porphyrin-containing compound metabolism; bacteriochlorophyll biosynthesis (light-independent). Its function is as follows. Involved in the biosynthesis of the major light-harvesting pigment bacteriochlorophyll c (BChlc), which confers a significant competitive advantage to green sulfur bacteria living at limiting red and near-infrared light intensities. BchR is a methyltransferase that adds a single methyl group to the methyl carbon at the C-12(1) position of 8-ethyl-12-methyl-3-vinylbacteriochlorophyllide d to yield 8,12-diethyl-3-vinylbacteriochlorophyllide d. This Chlorobaculum tepidum (strain ATCC 49652 / DSM 12025 / NBRC 103806 / TLS) (Chlorobium tepidum) protein is Bacteriochlorophyllide d C-12(1)-methyltransferase.